Here is a 275-residue protein sequence, read N- to C-terminus: Transcription factor Ovo-like 2 (275 aa).

The tract at residues 15 to 101 is disordered; that stretch reads SVRSWDELPD…GHLATKQRPV (87 aa). Basic and acidic residues-rich tracts occupy residues 18–29 and 39–49; these read SWDELPDEKRAD and LLHDPPEDCRS. Residues 56–76 are compositionally biased toward low complexity; that stretch reads GSGSSSAGEPGGAESSSSPHA. Acidic residues predominate over residues 80–89; it reads ETPEPGDAEG. 4 C2H2-type zinc fingers span residues 119–141, 147–169, 175–198, and 214–237; these read HSCDLCGKGFRLQRMLNRHLKCH, HLCTFCGKGFNDTFDLKRHVRTH, YKCNVCNKAFTQRCSLESHLKKIH, and YVCEDCGYTGPTQEDLYLHVNSAH. A Phosphoserine modification is found at Ser269.

This sequence belongs to the krueppel C2H2-type zinc-finger protein family. Interacts (via zinc-finger domains) with CEBPA (via bZIP domain); the interaction inhibits the transcription factor activity of CEBPA and is required to repress adipogenesis. In terms of tissue distribution, expressed in testis, ovary, heart and skeletal muscle. Expressed in the cornea, but absent from the corneal endothelium.

The protein localises to the nucleus. Its function is as follows. Zinc-finger transcription repressor factor. Plays a critical role in maintaining the identity of epithelial lineages by suppressing epithelial-to mesenchymal transition (EMT) mainly through the repression of ZEB1, an EMT inducer. Positively regulates neuronal differentiation. Suppresses cell cycling and terminal differentiation of keratinocytes by directly repressing MYC and NOTCH1. Important for the correct development of primordial germ cells in embryos. Plays dual functions in thermogenesis and adipogenesis to maintain energy balance. Essential for brown/beige adipose tissue-mediated thermogenesis, is necessary for the development of brown adipocytes. In white adipose tissues, limits adipogenesis by blocking CEBPA binding to its transcriptional targets and inhibiting its transcription factor activity. The chain is Transcription factor Ovo-like 2 from Homo sapiens (Human).